Reading from the N-terminus, the 715-residue chain is Methionine--tRNA ligase (715 aa).

The 'HIGH' region motif lies at P17 to H27. Zn(2+) contacts are provided by C148, C151, C161, and C164. The 'KMSKS' region motif lies at K359–S363. K362 contributes to the ATP binding site. The tRNA-binding domain maps to D614 to K715.

The protein belongs to the class-I aminoacyl-tRNA synthetase family. MetG type 1 subfamily. In terms of assembly, homodimer. Zn(2+) is required as a cofactor.

The protein resides in the cytoplasm. The catalysed reaction is tRNA(Met) + L-methionine + ATP = L-methionyl-tRNA(Met) + AMP + diphosphate. Is required not only for elongation of protein synthesis but also for the initiation of all mRNA translation through initiator tRNA(fMet) aminoacylation. This is Methionine--tRNA ligase from Leptospira interrogans serogroup Icterohaemorrhagiae serovar copenhageni (strain Fiocruz L1-130).